A 234-amino-acid chain; its full sequence is Lipoprotein-releasing system ATP-binding protein LolD 1 (234 aa).

Residues 5–231 (IEARGIEKVF…RLTSNVRDPG (227 aa)) form the ABC transporter domain. ATP is bound at residue 41–48 (GASGSGKS).

This sequence belongs to the ABC transporter superfamily. Lipoprotein translocase (TC 3.A.1.125) family. In terms of assembly, the complex is composed of two ATP-binding proteins (LolD) and two transmembrane proteins (LolC and LolE).

The protein localises to the cell inner membrane. Its function is as follows. Part of the ABC transporter complex LolCDE involved in the translocation of mature outer membrane-directed lipoproteins, from the inner membrane to the periplasmic chaperone, LolA. Responsible for the formation of the LolA-lipoprotein complex in an ATP-dependent manner. This Caulobacter vibrioides (strain ATCC 19089 / CIP 103742 / CB 15) (Caulobacter crescentus) protein is Lipoprotein-releasing system ATP-binding protein LolD 1.